We begin with the raw amino-acid sequence, 85 residues long: Putative membrane protein insertion efficiency factor (85 aa).

Belongs to the UPF0161 family.

Its subcellular location is the cell inner membrane. Its function is as follows. Could be involved in insertion of integral membrane proteins into the membrane. This is Putative membrane protein insertion efficiency factor from Tolumonas auensis (strain DSM 9187 / NBRC 110442 / TA 4).